The sequence spans 236 residues: Probable transcriptional regulatory protein Suden_1389 (236 aa).

It belongs to the TACO1 family.

It is found in the cytoplasm. In Sulfurimonas denitrificans (strain ATCC 33889 / DSM 1251) (Thiomicrospira denitrificans (strain ATCC 33889 / DSM 1251)), this protein is Probable transcriptional regulatory protein Suden_1389.